The sequence spans 236 residues: Proteasome subunit alpha (236 aa).

It belongs to the peptidase T1A family. As to quaternary structure, the 20S proteasome core is composed of 14 alpha and 14 beta subunits that assemble into four stacked heptameric rings, resulting in a barrel-shaped structure. The two inner rings, each composed of seven catalytic beta subunits, are sandwiched by two outer rings, each composed of seven alpha subunits. The catalytic chamber with the active sites is on the inside of the barrel. Has a gated structure, the ends of the cylinder being occluded by the N-termini of the alpha-subunits. Is capped by the proteasome-associated ATPase, ARC.

Its subcellular location is the cytoplasm. Its pathway is protein degradation; proteasomal Pup-dependent pathway. The formation of the proteasomal ATPase ARC-20S proteasome complex, likely via the docking of the C-termini of ARC into the intersubunit pockets in the alpha-rings, may trigger opening of the gate for substrate entry. Interconversion between the open-gate and close-gate conformations leads to a dynamic regulation of the 20S proteasome proteolysis activity. Functionally, component of the proteasome core, a large protease complex with broad specificity involved in protein degradation. The sequence is that of Proteasome subunit alpha from Pseudarthrobacter chlorophenolicus (strain ATCC 700700 / DSM 12829 / CIP 107037 / JCM 12360 / KCTC 9906 / NCIMB 13794 / A6) (Arthrobacter chlorophenolicus).